The sequence spans 137 residues: Seminal plasma sperm motility inhibitor (137 aa).

An N-terminal signal peptide occupies residues M1 to T21. C30 and C51 are disulfide-bonded. Residues C30–I131 enclose the CUB domain. N-linked (GlcNAc...) asparagine glycosylation is present at N36.

It belongs to the spermadhesin family. In terms of tissue distribution, seminal plasma or sperm.

It is found in the secreted. Inhibitor of sperm motility. The chain is Seminal plasma sperm motility inhibitor (SPMI) from Sus scrofa (Pig).